Here is a 201-residue protein sequence, read N- to C-terminus: MQVVLLERVEKLGQMGDVVKVKDGFARNFLLPRKKALRATKANIERFEGQRAQLEARNLELKKEAEQVHTKVHGQSFIILRQAGETGILYGSVSTRDIATAMTDGGFTAARNQVVLDKPIKTIGLHDVRIVLHPEVSATIAINVARTQEEAERQAAGEDLTQRRDDEEEEAVEAAEFFESEELAPGDEEEEAAGEEEDAKE.

Positions 150–165 (EAERQAAGEDLTQRRD) are enriched in basic and acidic residues. The segment at 150–201 (EAERQAAGEDLTQRRDDEEEEAVEAAEFFESEELAPGDEEEEAAGEEEDAKE) is disordered. A compositionally biased stretch (acidic residues) spans 166–201 (DEEEEAVEAAEFFESEELAPGDEEEEAAGEEEDAKE).

Belongs to the bacterial ribosomal protein bL9 family.

Functionally, binds to the 23S rRNA. The chain is Large ribosomal subunit protein bL9 from Parvibaculum lavamentivorans (strain DS-1 / DSM 13023 / NCIMB 13966).